The following is an 87-amino-acid chain: Antitoxin epsilon (87 aa).

Belongs to the epsilon antitoxin family. In terms of assembly, in the presence of the zeta toxin, forms an inactive PezA(2)PezT(2) heterotetramer.

In terms of biological role, antitoxin component of a type II toxin-antitoxin (TA) system. Neutralizes the toxic effect of cognate zeta toxin. Part of a postsegregational killing (PSK) system involved in the killing of plasmid-free cells. Continuous synthesis of the epsilon antitoxin is required to counteract the zeta toxin. The sequence is that of Antitoxin epsilon from Lactococcus lactis subsp. lactis (Streptococcus lactis).